The primary structure comprises 324 residues: Acetyl-coenzyme A carboxylase carboxyl transferase subunit alpha (324 aa).

The 255-residue stretch at 44-298 folds into the CoA carboxyltransferase C-terminal domain; the sequence is ILQRKLLNLK…KNKIRDQLDF (255 aa).

Belongs to the AccA family. Acetyl-CoA carboxylase is a heterohexamer composed of biotin carboxyl carrier protein (accB), biotin carboxylase (accC) and two subunits each of ACCase subunit alpha (accA) and ACCase subunit beta (accD).

The protein localises to the plastid. It localises to the chloroplast. It catalyses the reaction N(6)-carboxybiotinyl-L-lysyl-[protein] + acetyl-CoA = N(6)-biotinyl-L-lysyl-[protein] + malonyl-CoA. It participates in lipid metabolism; malonyl-CoA biosynthesis; malonyl-CoA from acetyl-CoA: step 1/1. Functionally, component of the acetyl coenzyme A carboxylase (ACC) complex. First, biotin carboxylase catalyzes the carboxylation of biotin on its carrier protein (BCCP) and then the CO(2) group is transferred by the carboxyltransferase to acetyl-CoA to form malonyl-CoA. In Cyanidium caldarium (Red alga), this protein is Acetyl-coenzyme A carboxylase carboxyl transferase subunit alpha.